The sequence spans 1011 residues: E3 ubiquitin-protein ligase mib1 (1011 aa).

Positions 6–74 (NNRVMVEGVG…AYDLRIMDSA (69 aa)) constitute an MIB/HERC2 1 domain. The ZZ-type zinc finger occupies 80-132 (HDGTMCDTCRQQPIIGIRWKCAECTNYDLCTVCYHGDKHHLRHRFYRITTPGS). Cys85, Cys88, Cys100, Cys103, Cys109, Cys112, His118, and His122 together coordinate Zn(2+). An MIB/HERC2 2 domain is found at 143–221 (SKKITARGIF…MSDLKCVQDA (79 aa)). ANK repeat units lie at residues 430-460 (DLNE…DVNG), 463-492 (AGHT…DVEA), 496-525 (DGDR…DLNA), 529-558 (RRQT…HPSL), 562-591 (EGDT…DVTI), 595-627 (NGFN…IVDE), 631-661 (DGYT…NLDI), 665-694 (NQQT…KLDI), and 698-729 (DGDT…KVDT). RING-type zinc fingers lie at residues 820–855 (CMVC…LLCK) and 867–902 (CVVC…VQCR). Residues 936–963 (QKDKDNTNVNADVQKLQQQLQDIKEQTM) are a coiled coil. The RING-type 3 zinc-finger motif lies at 964 to 997 (CPVCLDRLKNMIFMCGHGTCQLCGDRMSECPICR).

It is found in the cytoplasm. It localises to the cytoskeleton. The protein resides in the microtubule organizing center. Its subcellular location is the centrosome. The protein localises to the centriolar satellite. It carries out the reaction S-ubiquitinyl-[E2 ubiquitin-conjugating enzyme]-L-cysteine + [acceptor protein]-L-lysine = [E2 ubiquitin-conjugating enzyme]-L-cysteine + N(6)-ubiquitinyl-[acceptor protein]-L-lysine.. It participates in protein modification; protein ubiquitination. E3 ubiquitin-protein ligase that mediates ubiquitination of Delta receptors, which act as ligands of Notch proteins. Positively regulates the Delta-mediated Notch signaling by ubiquitinating the intracellular domain of Delta, leading to endocytosis of Delta receptors. The protein is E3 ubiquitin-protein ligase mib1 (mib1) of Xenopus laevis (African clawed frog).